The following is a 54-amino-acid chain: Large ribosomal subunit protein bL33 (54 aa).

Belongs to the bacterial ribosomal protein bL33 family.

The sequence is that of Large ribosomal subunit protein bL33 from Chloroflexus aggregans (strain MD-66 / DSM 9485).